The chain runs to 134 residues: Arsenate reductase (134 aa).

Active-site nucleophile residues include C11, C83, and C90. 2 disulfides stabilise this stretch: C11–C83 and C83–C90.

This sequence belongs to the low molecular weight phosphotyrosine protein phosphatase family. Thioredoxin-coupled ArsC subfamily.

Its subcellular location is the cytoplasm. It carries out the reaction arsenate + [thioredoxin]-dithiol + H(+) = arsenite + [thioredoxin]-disulfide + H2O. Catalyzes the reduction of arsenate [As(V)] to arsenite [As(III)]. The protein is Arsenate reductase of Bacillus cereus (strain G9842).